The primary structure comprises 119 residues: Large ribosomal subunit protein uL22c (119 aa).

The protein belongs to the universal ribosomal protein uL22 family. Part of the 50S ribosomal subunit.

The protein localises to the plastid. The protein resides in the chloroplast. Its function is as follows. This protein binds specifically to 23S rRNA. Functionally, the globular domain of the protein is located near the polypeptide exit tunnel on the outside of the subunit, while an extended beta-hairpin is found that lines the wall of the exit tunnel in the center of the 70S ribosome. This Chlorokybus atmophyticus (Soil alga) protein is Large ribosomal subunit protein uL22c (rpl22).